We begin with the raw amino-acid sequence, 183 residues long: uncharacterized protein (183 aa).

The signal sequence occupies residues 1-17 (MVLFILVLYTCIQDGNG).

This is an uncharacterized protein from Saccharomyces cerevisiae (strain ATCC 204508 / S288c) (Baker's yeast).